The sequence spans 799 residues: Valine--tRNA ligase (799 aa).

Lys-536 provides a ligand contact to ATP.

This sequence belongs to the class-I aminoacyl-tRNA synthetase family. ValS type 2 subfamily.

The protein resides in the cytoplasm. It catalyses the reaction tRNA(Val) + L-valine + ATP = L-valyl-tRNA(Val) + AMP + diphosphate. In terms of biological role, catalyzes the attachment of valine to tRNA(Val). As ValRS can inadvertently accommodate and process structurally similar amino acids such as threonine, to avoid such errors, it has a 'posttransfer' editing activity that hydrolyzes mischarged Thr-tRNA(Val) in a tRNA-dependent manner. The polypeptide is Valine--tRNA ligase (valS) (Pyrobaculum aerophilum (strain ATCC 51768 / DSM 7523 / JCM 9630 / CIP 104966 / NBRC 100827 / IM2)).